We begin with the raw amino-acid sequence, 504 residues long: Maturase K (504 aa).

It belongs to the intron maturase 2 family. MatK subfamily.

Its subcellular location is the plastid. It localises to the chloroplast. Usually encoded in the trnK tRNA gene intron. Probably assists in splicing its own and other chloroplast group II introns. This Simmondsia chinensis (Jojoba) protein is Maturase K.